The chain runs to 432 residues: Uracil permease (432 aa).

12 helical membrane-spanning segments follow: residues 25–45 (LFAM…DPSI), 65–85 (VPAY…AKTA), 89–109 (GAAM…ALII), 124–144 (VVVG…AVGM), 155–175 (LLHF…SVLA), 181–201 (LIPV…VGLV), 206–226 (VAAA…DYPV), 228–248 (VTWE…SEHI), 305–325 (VYSV…GFVG), 330–350 (LISS…FGII), 370–390 (NLVI…LKIS), and 393–413 (FQIT…LILP).

Belongs to the nucleobase:cation symporter-2 (NCS2) (TC 2.A.40) family.

It localises to the cell membrane. Transport of uracil in the cell. This Bacillus caldolyticus protein is Uracil permease (pyrP).